A 597-amino-acid polypeptide reads, in one-letter code: Ribosomal oxygenase 1 (597 aa).

Position 1 is an N-acetylmethionine (Met1). The disordered stretch occupies residues 1 to 138 (MDELPNGNGA…HVDDPERPWD (138 aa)). Basic residues-rich tracts occupy residues 14–24 (KRGRGRRRRQP) and 37–48 (RPRKVRRHRKSA). The segment covering 49–62 (ASRVAALRARALLS) has biased composition (low complexity). Phosphoserine occurs at positions 62 and 65. Residues 72 to 81 (VRGKRERPAE) show a composition bias toward basic and acidic residues. Ser86 carries the phosphoserine modification. Residues 250-395 (CSLRLLCPQA…DFLEAVLPLA (146 aa)) enclose the JmjC domain. Fe cation contacts are provided by His296, Asp298, and His361.

It belongs to the ROX family. NO66 subfamily. Interacts with SP7/OSX; the interaction is direct. Interacts with MYC. Interacts with PHF19; leading to its recruitment to H3K36me3 sites. Fe(2+) serves as cofactor.

The protein localises to the nucleus. The protein resides in the nucleolus. It is found in the nucleoplasm. The enzyme catalyses N(6),N(6)-dimethyl-L-lysyl(36)-[histone H3] + 2 2-oxoglutarate + 2 O2 = L-lysyl(36)-[histone H3] + 2 formaldehyde + 2 succinate + 2 CO2. It carries out the reaction N(6)-methyl-L-lysyl-[protein] + 2-oxoglutarate + O2 = L-lysyl-[protein] + formaldehyde + succinate + CO2. It catalyses the reaction L-histidyl-[protein] + 2-oxoglutarate + O2 = (3S)-3-hydroxy-L-histidyl-[protein] + succinate + CO2. Oxygenase that can act as both a histone lysine demethylase and a ribosomal histidine hydroxylase. Specifically demethylates 'Lys-4' (H3K4me) and 'Lys-36' (H3K36me) of histone H3, thereby playing a central role in histone code. Preferentially demethylates trimethylated H3 'Lys-4' (H3K4me3) and monomethylated H3 'Lys-4' (H3K4me1) residues, while it has weaker activity for dimethylated H3 'Lys-36' (H3K36me2). Acts as a regulator of osteoblast differentiation via its interaction with SP7/OSX by demethylating H3K4me and H3K36me, thereby inhibiting SP7/OSX-mediated promoter activation. Also catalyzes demethylation of non-histone proteins, such as CGAS: demethylation of monomethylated CGAS promotes interaction between CGAS and PARP1, followed by PARP1 inactivation. Also catalyzes the hydroxylation of 60S ribosomal protein L8 on 'His-216', thereby playing a role in ribosome biogenesis. Participates in MYC-induced transcriptional activation. The chain is Ribosomal oxygenase 1 from Rattus norvegicus (Rat).